The chain runs to 160 residues: Ribosomal RNA large subunit methyltransferase H (160 aa).

Residues L76, G108, and 127-132 (LGELTW) each bind S-adenosyl-L-methionine.

It belongs to the RNA methyltransferase RlmH family. Homodimer.

The protein resides in the cytoplasm. It catalyses the reaction pseudouridine(1915) in 23S rRNA + S-adenosyl-L-methionine = N(3)-methylpseudouridine(1915) in 23S rRNA + S-adenosyl-L-homocysteine + H(+). Functionally, specifically methylates the pseudouridine at position 1915 (m3Psi1915) in 23S rRNA. This is Ribosomal RNA large subunit methyltransferase H from Brucella anthropi (strain ATCC 49188 / DSM 6882 / CCUG 24695 / JCM 21032 / LMG 3331 / NBRC 15819 / NCTC 12168 / Alc 37) (Ochrobactrum anthropi).